We begin with the raw amino-acid sequence, 950 residues long: MORC family CW-type zinc finger protein 1 (950 aa).

Residues 281 to 342 (KGKFKTEVQK…TKHKSLRQKQ (62 aa)) adopt a coiled-coil conformation. A CW-type zinc finger spans residues 465-530 (SLESLQWRRR…SCNQIERLPS (66 aa)). Positions 485, 488, 511, and 522 each coordinate Zn(2+). Disordered stretches follow at residues 532-551 (PLGTVNRRPPSKDERERQLQ) and 679-700 (KKQQSESLVQAGKASTDVASSR). Positions 541–550 (PSKDERERQL) are enriched in basic and acidic residues. Residues 885-916 (LGQCELKRKRTEEKLSDLRAKLALLLQKLQLG) adopt a coiled-coil conformation.

Expressed at very low level in male germ cells.

It localises to the nucleus. Its function is as follows. Required for spermatogenesis. Essential for de novo DNA methylation and silencing of transposable elements in the male embryonic germ cells. Not required for piRNA biosynthesis. In Mus musculus (Mouse), this protein is MORC family CW-type zinc finger protein 1.